Reading from the N-terminus, the 325-residue chain is 4-hydroxy-3-methylbut-2-enyl diphosphate reductase (325 aa).

Cysteine 13 lines the [4Fe-4S] cluster pocket. 2 residues coordinate (2E)-4-hydroxy-3-methylbut-2-enyl diphosphate: histidine 42 and histidine 76. Residues histidine 42 and histidine 76 each contribute to the dimethylallyl diphosphate site. Residues histidine 42 and histidine 76 each coordinate isopentenyl diphosphate. Position 98 (cysteine 98) interacts with [4Fe-4S] cluster. Histidine 126 contributes to the (2E)-4-hydroxy-3-methylbut-2-enyl diphosphate binding site. Histidine 126 contacts dimethylallyl diphosphate. Histidine 126 serves as a coordination point for isopentenyl diphosphate. The active-site Proton donor is the glutamate 128. Position 169 (threonine 169) interacts with (2E)-4-hydroxy-3-methylbut-2-enyl diphosphate. Position 230 (cysteine 230) interacts with [4Fe-4S] cluster. (2E)-4-hydroxy-3-methylbut-2-enyl diphosphate-binding residues include serine 258, serine 259, asparagine 260, and serine 306. Dimethylallyl diphosphate is bound by residues serine 258, serine 259, asparagine 260, and serine 306. Isopentenyl diphosphate-binding residues include serine 258, serine 259, asparagine 260, and serine 306.

The protein belongs to the IspH family. The cofactor is [4Fe-4S] cluster.

The enzyme catalyses isopentenyl diphosphate + 2 oxidized [2Fe-2S]-[ferredoxin] + H2O = (2E)-4-hydroxy-3-methylbut-2-enyl diphosphate + 2 reduced [2Fe-2S]-[ferredoxin] + 2 H(+). It carries out the reaction dimethylallyl diphosphate + 2 oxidized [2Fe-2S]-[ferredoxin] + H2O = (2E)-4-hydroxy-3-methylbut-2-enyl diphosphate + 2 reduced [2Fe-2S]-[ferredoxin] + 2 H(+). It functions in the pathway isoprenoid biosynthesis; dimethylallyl diphosphate biosynthesis; dimethylallyl diphosphate from (2E)-4-hydroxy-3-methylbutenyl diphosphate: step 1/1. It participates in isoprenoid biosynthesis; isopentenyl diphosphate biosynthesis via DXP pathway; isopentenyl diphosphate from 1-deoxy-D-xylulose 5-phosphate: step 6/6. Functionally, catalyzes the conversion of 1-hydroxy-2-methyl-2-(E)-butenyl 4-diphosphate (HMBPP) into a mixture of isopentenyl diphosphate (IPP) and dimethylallyl diphosphate (DMAPP). Acts in the terminal step of the DOXP/MEP pathway for isoprenoid precursor biosynthesis. In Prosthecochloris aestuarii (strain DSM 271 / SK 413), this protein is 4-hydroxy-3-methylbut-2-enyl diphosphate reductase.